Consider the following 209-residue polypeptide: Amelotin (209 aa).

An N-terminal signal peptide occupies residues 1 to 16 (MRSTILLFCLLGSTRS). Residues 142 to 209 (AGANPDVQDG…ATTESANGIQ (68 aa)) form a disordered region.

Belongs to the amelotin family. In terms of processing, phosphorylated by FAM20C in vitro. Post-translationally, O-glycosylated.

The protein resides in the secreted. In terms of biological role, is a promoter of calcium phosphate mineralization, playing a critical role in the formation of the compact, mineralized, aprismatic enamel surface layer during the maturation stage of amelogenesis. The chain is Amelotin (AMTN) from Homo sapiens (Human).